Consider the following 272-residue polypeptide: Undecaprenyl-diphosphatase (272 aa).

The next 8 helical transmembrane spans lie at 2-22 (LELIKAIFLGIVEGITEWLPI), 50-70 (VIQLGAIMAVVVLYWNKLFPF), 83-103 (FSLWIKVLAATLPAALIGVPF), 110-130 (LFYNYITVAITLIVYGVLFII), 148-168 (LGYKAVLLIGAFQVLALIPGT), 195-215 (LAIPVMFGASLLKLVKFGFAF), 220-240 (LIILLTGMIVAFAVSIFAIKF), and 250-270 (FKAFGYYRIILGLIVVLYFLA).

This sequence belongs to the UppP family.

Its subcellular location is the cell membrane. The catalysed reaction is di-trans,octa-cis-undecaprenyl diphosphate + H2O = di-trans,octa-cis-undecaprenyl phosphate + phosphate + H(+). In terms of biological role, catalyzes the dephosphorylation of undecaprenyl diphosphate (UPP). Confers resistance to bacitracin. The sequence is that of Undecaprenyl-diphosphatase from Acetivibrio thermocellus (strain ATCC 27405 / DSM 1237 / JCM 9322 / NBRC 103400 / NCIMB 10682 / NRRL B-4536 / VPI 7372) (Clostridium thermocellum).